The chain runs to 165 residues: Lymphocyte antigen 6K (165 aa).

The first 17 residues, 1–17 (MALLALLLVVALPRVWT), serve as a signal peptide directing secretion. Asparagine 20 is a glycosylation site (N-linked (GlcNAc...) asparagine). Residues 47–141 (ERENTFECQN…VFKEYAGSMG (95 aa)) form the UPAR/Ly6 domain. Glycine 138 carries the GPI-anchor amidated glycine lipid modification. Residues 139–165 (SMGESCGGLWLAILLLLASIAAGLSLS) constitute a propeptide, removed in mature form.

Interacts with TEX101. As to expression, specifically expressed in testis (at protein level).

It localises to the secreted. The protein localises to the cytoplasm. It is found in the cell membrane. Its subcellular location is the cytoplasmic vesicle. The protein resides in the secretory vesicle. It localises to the acrosome. The protein localises to the membrane raft. Required for sperm migration into the oviduct and male fertility by controlling binding of sperm to zona pellucida. May play a role in cell growth. This Homo sapiens (Human) protein is Lymphocyte antigen 6K.